Reading from the N-terminus, the 412-residue chain is Proteasome-activating nucleotidase (412 aa).

Residues 18–72 adopt a coiled-coil conformation; it reads YRYLVDRVAGMESQNQELKEQIRQLESDKRYIETQKIRYEREVRKLKSEIEHLKT. Residues 197–202 and His336 contribute to the ATP site; that span reads GTGKTL. Residues 410–412 are docks into pockets in the proteasome alpha-ring to cause gate opening; it reads MFA.

It belongs to the AAA ATPase family. As to quaternary structure, homohexamer. The hexameric complex has a two-ring architecture resembling a top hat that caps the 20S proteasome core at one or both ends. Upon ATP-binding, the C-terminus of PAN interacts with the alpha-rings of the proteasome core by binding to the intersubunit pockets.

The protein resides in the cytoplasm. Its function is as follows. ATPase which is responsible for recognizing, binding, unfolding and translocation of substrate proteins into the archaeal 20S proteasome core particle. Is essential for opening the gate of the 20S proteasome via an interaction with its C-terminus, thereby allowing substrate entry and access to the site of proteolysis. Thus, the C-termini of the proteasomal ATPase function like a 'key in a lock' to induce gate opening and therefore regulate proteolysis. Unfolding activity requires energy from ATP hydrolysis, whereas ATP binding alone promotes ATPase-20S proteasome association which triggers gate opening, and supports translocation of unfolded substrates. This Methanospirillum hungatei JF-1 (strain ATCC 27890 / DSM 864 / NBRC 100397 / JF-1) protein is Proteasome-activating nucleotidase.